The following is a 493-amino-acid chain: Extracellular tyrosine-protein kinase PKDCC (493 aa).

The signal sequence occupies residues 1-32; that stretch reads MRRRRAAVAAGFCASFLLGSVLNVLFAPGSEP. The segment at 28–128 is disordered; sequence PGSEPPRPGQ…PGPGSPGPGP (101 aa). The span at 30 to 46 shows a compositional bias: pro residues; that stretch reads SEPPRPGQSPEPSPAPG. Over residues 52 to 69 the composition is skewed to basic and acidic residues; it reads GRGELARQIRARYEEVQR. 2 stretches are compositionally biased toward pro residues: residues 95 to 105 and 114 to 127; these read PGLPRPRPPWA and GWPP…PGPG. N-linked (GlcNAc...) asparagine glycosylation occurs at N137. Positions 138-493 constitute a Protein kinase domain; sequence VSGAQYMGSG…NKTTYVKASG (356 aa). ATP-binding positions include 144-152 and K166; that span reads MGSGYTKAV. Residue Y148 is modified to Phosphotyrosine. S177 is subject to Phosphoserine. The active-site Proton acceptor is D278. 5 N-linked (GlcNAc...) asparagine glycosylation sites follow: N320, N369, N400, N460, and N484.

The protein belongs to the protein kinase superfamily. Post-translationally, N-glycosylated. Phosphorylated on tyrosines; probably via autophosphorylation. In terms of tissue distribution, highly expressed in platelets.

The protein resides in the secreted. It is found in the golgi apparatus. The enzyme catalyses L-tyrosyl-[protein] + ATP = O-phospho-L-tyrosyl-[protein] + ADP + H(+). Secreted tyrosine-protein kinase that mediates phosphorylation of extracellular proteins and endogenous proteins in the secretory pathway, which is essential for patterning at organogenesis stages. Mediates phosphorylation of MMP1, MMP13, MMP14, MMP19 and ERP29. Probably plays a role in platelets: rapidly and quantitatively secreted from platelets in response to stimulation of platelet degranulation. May also have serine/threonine protein kinase activity. Required for longitudinal bone growth through regulation of chondrocyte differentiation. May be indirectly involved in protein transport from the Golgi apparatus to the plasma membrane. The chain is Extracellular tyrosine-protein kinase PKDCC from Homo sapiens (Human).